We begin with the raw amino-acid sequence, 426 residues long: Glutamate-1-semialdehyde 2,1-aminomutase (426 aa).

An N6-(pyridoxal phosphate)lysine modification is found at lysine 265.

Belongs to the class-III pyridoxal-phosphate-dependent aminotransferase family. HemL subfamily. As to quaternary structure, homodimer. Pyridoxal 5'-phosphate is required as a cofactor.

It is found in the cytoplasm. It catalyses the reaction (S)-4-amino-5-oxopentanoate = 5-aminolevulinate. The protein operates within porphyrin-containing compound metabolism; protoporphyrin-IX biosynthesis; 5-aminolevulinate from L-glutamyl-tRNA(Glu): step 2/2. This chain is Glutamate-1-semialdehyde 2,1-aminomutase, found in Actinobacillus pleuropneumoniae serotype 7 (strain AP76).